A 206-amino-acid polypeptide reads, in one-letter code: MVFSSYMLPALPYDYDALEPVISAEIMQLHHQKHHQGYINNLNEALKSLDVANATQDLARLIAINPALRFNGGSHINHSLFWEMLAPQGKGGGVPPRHELLKLIEKFWGSFDNFLKNFITSSAAVQGSGWGWLAFCPQKQELMVQTTANQDPLEATTGMIPLLGVDVWEHAYYLQYKNARMDYLKSFPSIINWDYIENRFVEMSKQ.

4 residues coordinate Mn(2+): His-30, His-78, Asp-166, and His-170.

It belongs to the iron/manganese superoxide dismutase family. As to quaternary structure, homodimer. It depends on Mn(2+) as a cofactor.

It carries out the reaction 2 superoxide + 2 H(+) = H2O2 + O2. Its function is as follows. Destroys superoxide anion radicals which are normally produced within the cells and which are toxic to biological systems. The chain is Superoxide dismutase [Mn] (sodA) from Chlamydia trachomatis serovar D (strain ATCC VR-885 / DSM 19411 / UW-3/Cx).